The sequence spans 129 residues: Small ribosomal subunit protein uS11 (129 aa).

The protein belongs to the universal ribosomal protein uS11 family. In terms of assembly, part of the 30S ribosomal subunit. Interacts with proteins S7 and S18. Binds to IF-3.

Located on the platform of the 30S subunit, it bridges several disparate RNA helices of the 16S rRNA. Forms part of the Shine-Dalgarno cleft in the 70S ribosome. The protein is Small ribosomal subunit protein uS11 of Geobacillus sp. (strain WCH70).